The following is a 315-amino-acid chain: Solute carrier family 25 member 32 (315 aa).

Solcar repeat units follow at residues His-20–Tyr-109, Leu-118–Lys-209, and Leu-222–Phe-306. A run of 6 helical transmembrane segments spans residues Leu-26–Leu-43, Val-89–Ile-106, Tyr-123–Val-143, Phe-186–Tyr-203, Tyr-227–Tyr-243, and Gly-281–Tyr-300.

Belongs to the mitochondrial carrier (TC 2.A.29) family.

Its subcellular location is the mitochondrion inner membrane. It catalyses the reaction FAD(in) = FAD(out). Its function is as follows. Facilitates flavin adenine dinucleotide (FAD) translocation across the mitochondrial inner membrane into the mitochondrial matrix where it acts as a redox cofactor to assist flavoenzyme activities in fundamental metabolic processes including fatty acid beta-oxidation, amino acid and choline metabolism as well as mitochondrial electron transportation. In particular, provides FAD to DLD dehydrogenase of the glycine cleavage system, part of mitochondrial one-carbon metabolic pathway involved in neural tube closure in early embryogenesis. This Macaca fascicularis (Crab-eating macaque) protein is Solute carrier family 25 member 32.